Consider the following 104-residue polypeptide: Gastrin (104 aa).

The first 21 residues, Met1–Ala21, serve as a signal peptide directing secretion. Positions Ser22–Arg58 are excised as a propeptide. The segment at Trp23–Asn104 is disordered. The segment covering Pro25–Arg37 has biased composition (polar residues). Residue Tyr87 is modified to Sulfotyrosine. Residue Phe92 is modified to Phenylalanine amide. The residue at position 96 (Ser96) is a Phosphoserine. A propeptide spanning residues Ser96–Asn104 is cleaved from the precursor. Tyr103 carries the post-translational modification Sulfotyrosine.

It belongs to the gastrin/cholecystokinin family. In terms of processing, sulfation on Tyr-87 enhances proteolytic processing, and blocks peptide degradation. Levels of sulfation differ between proteolytically-cleaved gastrins and between tissues.

It localises to the secreted. Functionally, gastrin stimulates the stomach mucosa to produce and secrete hydrochloric acid and the pancreas to secrete its digestive enzymes. It also stimulates smooth muscle contraction and increases blood circulation and water secretion in the stomach and intestine. The protein is Gastrin (Gast) of Rattus norvegicus (Rat).